A 386-amino-acid chain; its full sequence is Sphingosine 1-phosphate receptor 4 (386 aa).

The Extracellular segment spans residues 1–56; it reads MNISTWSTLVTPESCHRLAASGHSLLIVLHYNHSGRLASRGGSEDGGGLGMLRGPS. 2 N-linked (GlcNAc...) asparagine glycosylation sites follow: asparagine 2 and asparagine 32. Residues 57–77 form a helical membrane-spanning segment; sequence VAAGCLVVLENAMVLAAIAIY. Residues 78–87 lie on the Cytoplasmic side of the membrane; sequence MRSRRWVYYC. Residues 88–108 traverse the membrane as a helical segment; sequence LLNITLSDLLTGLAYVVNVLL. The Extracellular portion of the chain corresponds to 109 to 120; the sequence is SGTRTFQLSPVH. Residues 121-141 traverse the membrane as a helical segment; sequence WFLREGLLFMALAASTFSLLF. At 142–163 the chain is on the cytoplasmic side; it reads TAGERFATMVRVAESGATKTSR. The helical transmembrane segment at 164 to 184 threads the bilayer; that stretch reads VYGCIGLCWLLAAILGLLPLL. Over 185–208 the chain is Extracellular; sequence GWNCVCAFPRCSSLLPLYSKGYVL. The chain crosses the membrane as a helical span at residues 209–229; that stretch reads FCVVVFALILVAILSLYGAIF. The Cytoplasmic portion of the chain corresponds to 230 to 254; the sequence is RVVRANGQKSPRPPARRKSRRLLNT. A helical transmembrane segment spans residues 255-275; the sequence is VLMILVAFVVCWGPLFGLLLA. Residues 276–290 are Extracellular-facing; that stretch reads DIFGSNVWAQEYLRG. Residues 291-311 traverse the membrane as a helical segment; that stretch reads MDWILALAVFNSAINPLIYSF. At 312 to 386 the chain is on the cytoplasmic side; the sequence is RSREVQRAVL…LSSISSVRST (75 aa). Residue cysteine 325 is the site of S-palmitoyl cysteine attachment.

Belongs to the G-protein coupled receptor 1 family. In terms of tissue distribution, specifically expressed in fetal and adult lymphoid and hematopoietic tissue. Expressed in lung, spleen, thymus and lymph node but absent in other non-lymphatic tissue. Coexpressed with GNA15 at the same relative levels in all tissues examined, with the highest levels in adult spleen and lung.

Its subcellular location is the cell membrane. Receptor for the lysosphingolipid sphingosine 1-phosphate (S1P). S1P is a bioactive lysophospholipid that elicits diverse physiological effect on most types of cells and tissues. May be involved in cell migration processes that are specific for lymphocytes. The chain is Sphingosine 1-phosphate receptor 4 (S1pr4) from Mus musculus (Mouse).